The following is a 525-amino-acid chain: Vesicular inhibitory amino acid transporter (525 aa).

Topologically, residues 1–132 are cytoplasmic; sequence MATLLRSKLS…WNVTNAIQGM (132 aa). Residues 83-107 are disordered; it reads IHYQRGSGAPLPPSGSKDQVGGGGE. Residues 133–153 form a helical membrane-spanning segment; that stretch reads FVLGLPYAILHGGYLGLFLII. At 154-204 the chain is on the lumenal, vesicle side; the sequence is FAAVVCCYTGKILIACLYEENEDGEVVRVRDSYVAIANACCAPRFPTLGGR. Tyr-186 carries the post-translational modification 3'-nitrotyrosine. Residues 205–225 form a helical membrane-spanning segment; that stretch reads VVNVAQIIELVMTCILYVVVS. Over 226–265 the chain is Cytoplasmic; the sequence is GNLMYNSFPGLPVSQKSWSIIATAVLLPCAFLKNLKAVSK. The helical transmembrane segment at 266 to 286 threads the bilayer; sequence FSLLCTLAHFVINILVIAYCL. Residues 287–305 are Lumenal, vesicle-facing; that stretch reads SRARDWAWEKVKFYIDVKK. The helical transmembrane segment at 306–326 threads the bilayer; it reads FPISIGIIVFSYTSQIFLPSL. Topologically, residues 327-341 are cytoplasmic; the sequence is EGNMQQPSEFHCMMN. A helical membrane pass occupies residues 342–362; that stretch reads WTHIAACVLKGLFALVAYLTW. The Lumenal, vesicle segment spans residues 363-383; that stretch reads ADETKEVITDNLPGSIRAVVN. The helical transmembrane segment at 384-404 threads the bilayer; that stretch reads IFLVAKALLSYPLPFFAAVEV. Over 405 to 438 the chain is Cytoplasmic; sequence LEKSLFQEGSRAFFPACYSGDGRLKSWGLTLRCA. The chain crosses the membrane as a helical span at residues 439-459; sequence LVVFTLLMAIYVPHFALLMGL. At 460–461 the chain is on the lumenal, vesicle side; it reads TG. Residues 462–482 traverse the membrane as a helical segment; it reads SLTGAGLCFLLPSLFHLRLLW. Over 483–489 the chain is Cytoplasmic; that stretch reads RKLLWHQ. The chain crosses the membrane as a helical span at residues 490–510; it reads VFFDVAIFVIGGICSVSGFVH. Over 511 to 525 the chain is Lumenal, vesicle; sequence SLEGLIEAYRTNAED.

Belongs to the amino acid/polyamine transporter 2 family. As to expression, retina. Expressed throughout the horizontal cells or more specifically at the terminals.

It localises to the cytoplasmic vesicle membrane. The protein localises to the presynapse. It catalyses the reaction 4-aminobutanoate(out) + n H(+)(in) = 4-aminobutanoate(in) + n H(+)(out). It carries out the reaction glycine(out) + n H(+)(in) = glycine(in) + n H(+)(out). The catalysed reaction is beta-alanine(out) + n H(+)(in) = beta-alanine(in) + n H(+)(out). Functionally, antiporter that exchanges vesicular protons for cytosolic 4-aminobutanoate or to a lesser extend glycine, thus allowing their secretion from nerve terminals. The transport is equally dependent on the chemical and electrical components of the proton gradient. May also transport beta-alanine. Acidification of GABAergic synaptic vesicles is a prerequisite for 4-aminobutanoate uptake. This is Vesicular inhibitory amino acid transporter from Homo sapiens (Human).